The following is a 441-amino-acid chain: Proline--tRNA ligase (441 aa).

This sequence belongs to the class-II aminoacyl-tRNA synthetase family. ProS type 2 subfamily. In terms of assembly, homodimer.

Its subcellular location is the cytoplasm. The catalysed reaction is tRNA(Pro) + L-proline + ATP = L-prolyl-tRNA(Pro) + AMP + diphosphate. In terms of biological role, catalyzes the attachment of proline to tRNA(Pro) in a two-step reaction: proline is first activated by ATP to form Pro-AMP and then transferred to the acceptor end of tRNA(Pro). The polypeptide is Proline--tRNA ligase (Afipia carboxidovorans (strain ATCC 49405 / DSM 1227 / KCTC 32145 / OM5) (Oligotropha carboxidovorans)).